A 242-amino-acid polypeptide reads, in one-letter code: Ribonuclease PH (242 aa).

Phosphate is bound by residues Arg87 and 125 to 127; that span reads GTR.

Belongs to the RNase PH family. Homohexameric ring arranged as a trimer of dimers.

It catalyses the reaction tRNA(n+1) + phosphate = tRNA(n) + a ribonucleoside 5'-diphosphate. Phosphorolytic 3'-5' exoribonuclease that plays an important role in tRNA 3'-end maturation. Removes nucleotide residues following the 3'-CCA terminus of tRNAs; can also add nucleotides to the ends of RNA molecules by using nucleoside diphosphates as substrates, but this may not be physiologically important. Probably plays a role in initiation of 16S rRNA degradation (leading to ribosome degradation) during starvation. This Thermosynechococcus vestitus (strain NIES-2133 / IAM M-273 / BP-1) protein is Ribonuclease PH.